The sequence spans 821 residues: Epidermal growth factor receptor kinase substrate 8 (821 aa).

Composition is skewed to polar residues over residues 1–10 (MNGHMSNRSS) and 17–28 (SQLNGYGSSPPY). The disordered stretch occupies residues 1–39 (MNGHMSNRSSGYGVYPSQLNGYGSSPPYSQMDREHSSRT). Ser58 is modified (phosphoserine). The PTB domain occupies 64 to 194 (QYRVEHLTTF…SDSKGGKQKR (131 aa)). Disordered regions lie at residues 204-224 (KADP…PGTV), 295-320 (SELS…TLRA), and 461-525 (ANAE…RNYD). The span at 208–221 (GIPPPPRAPAPVPP) shows a compositional bias: pro residues. Residue Thr223 is modified to Phosphothreonine. Positions 299–309 (KRKKSKKSKRK) are enriched in basic residues. Thr317 is subject to Phosphothreonine. The span at 464–476 (EHQRKQDSKRLST) shows a compositional bias: basic and acidic residues. Ser475 bears the Phosphoserine mark. Residues 530 to 589 (QPKKYAKSKYDFVARNSSELSVMKDDVLEILDDRRQWWKVRNASGDSGFVPNNILDIMRT) form the SH3 domain. The tract at residues 610–683 (TEYGLRSADT…YKQLPVDRRK (74 aa)) is disordered. Over residues 622–641 (APSPPPTPAPVPVPLPPSVP) the composition is skewed to pro residues. Position 624 is a phosphoserine; by MAPK (Ser624). Thr628 bears the Phosphothreonine; by MAPK mark. Residues 642 to 651 (APVSVPKVPA) are compositionally biased toward low complexity. The effector region stretch occupies residues 648-821 (KVPANVTRQN…VESFDEGSSH (174 aa)). A phosphoserine mark is found at Ser658 and Ser661. Over residues 670 to 683 (DSQRYKQLPVDRRK) the composition is skewed to basic and acidic residues. The amphipathic helix stretch occupies residues 679 to 697 (VDRRKSQMEEVQDELFQRL). Ser684 carries the phosphoserine modification. Helix bundle stretches follow at residues 717–737 (VINI…QSKG), 751–756 (GAQLFS), 761–766 (ELRSVC), and 765–784 (VCPE…AALE). The segment at 800-821 (QEKISAAASDSGVESFDEGSSH) is disordered. Ser810 and Ser814 each carry phosphoserine.

The protein belongs to the EPS8 family. In terms of assembly, homodimer. Part of a complex consisting of ABI1, EPS8 and SOS1. Interacts with BAIAP2. Interacts with SHB and LANCL1. Interacts with EGFR; mediates EPS8 phosphorylation. Interacts with MYO15A and WHRN. In terms of processing, ubiquitinated by the SCF(FBXW5) E3 ubiquitin-protein ligase complex during G2 phase, leading to its transient degradation and subsequent cell shape changes required to allow mitotic progression. Reappears at the midzone of dividing cells. Phosphorylation at Ser-624 and Thr-628 by MAPK following BDNF treatment promotes removal from actin and filopodia formation. Phosphorylated by several receptor tyrosine kinases. Expressed in neuronal cell body and neurites, and prominently enriched in the axonal growth cone. Expressed at the tips of cochlear hair cells stereocilia.

It localises to the cytoplasm. The protein resides in the cell cortex. Its subcellular location is the cell projection. The protein localises to the ruffle membrane. It is found in the growth cone. It localises to the stereocilium. The protein resides in the synapse. Its subcellular location is the synaptosome. Signaling adapter that controls various cellular protrusions by regulating actin cytoskeleton dynamics and architecture. Depending on its association with other signal transducers, can regulate different processes. Together with SOS1 and ABI1, forms a trimeric complex that participates in transduction of signals from Ras to Rac by activating the Rac-specific guanine nucleotide exchange factor (GEF) activity. Acts as a direct regulator of actin dynamics by binding actin filaments and has both barbed-end actin filament capping and actin bundling activities depending on the context. Displays barbed-end actin capping activity when associated with ABI1, thereby regulating actin-based motility process: capping activity is auto-inhibited and inhibition is relieved upon ABI1 interaction. Also shows actin bundling activity when associated with BAIAP2, enhancing BAIAP2-dependent membrane extensions and promoting filopodial protrusions. Involved in the regulation of processes such as axonal filopodia growth, stereocilia length, dendritic cell migration and cancer cell migration and invasion. Acts as a regulator of axonal filopodia formation in neurons: in the absence of neurotrophic factors, negatively regulates axonal filopodia formation via actin-capping activity. In contrast, it is phosphorylated in the presence of BDNF leading to inhibition of its actin-capping activity and stimulation of filopodia formation. Component of a complex with WHRN and MYO15A that localizes at stereocilia tips and is required for elongation of the stereocilia actin core. Indirectly involved in cell cycle progression; its degradation following ubiquitination being required during G2 phase to promote cell shape changes. This Mus musculus (Mouse) protein is Epidermal growth factor receptor kinase substrate 8 (Eps8).